The chain runs to 334 residues: Ketol-acid reductoisomerase (NADP(+)) (334 aa).

A KARI N-terminal Rossmann domain is found at 1-181 (MTTVYYDQDV…GATRAGVIET (181 aa)). NADP(+) is bound by residues 25–28 (YGSQ), Arg48, Ser52, and 82–85 (DEIQ). The active site involves His107. Gly133 contributes to the NADP(+) binding site. A KARI C-terminal knotted domain is found at 182 to 327 (TFKEETETDL…RELREMMPFI (146 aa)). Positions 190, 194, 226, and 230 each coordinate Mg(2+). Ser251 contacts substrate.

Belongs to the ketol-acid reductoisomerase family. It depends on Mg(2+) as a cofactor.

It catalyses the reaction (2R)-2,3-dihydroxy-3-methylbutanoate + NADP(+) = (2S)-2-acetolactate + NADPH + H(+). It carries out the reaction (2R,3R)-2,3-dihydroxy-3-methylpentanoate + NADP(+) = (S)-2-ethyl-2-hydroxy-3-oxobutanoate + NADPH + H(+). It functions in the pathway amino-acid biosynthesis; L-isoleucine biosynthesis; L-isoleucine from 2-oxobutanoate: step 2/4. It participates in amino-acid biosynthesis; L-valine biosynthesis; L-valine from pyruvate: step 2/4. Functionally, involved in the biosynthesis of branched-chain amino acids (BCAA). Catalyzes an alkyl-migration followed by a ketol-acid reduction of (S)-2-acetolactate (S2AL) to yield (R)-2,3-dihydroxy-isovalerate. In the isomerase reaction, S2AL is rearranged via a Mg-dependent methyl migration to produce 3-hydroxy-3-methyl-2-ketobutyrate (HMKB). In the reductase reaction, this 2-ketoacid undergoes a metal-dependent reduction by NADPH to yield (R)-2,3-dihydroxy-isovalerate. This is Ketol-acid reductoisomerase (NADP(+)) from Staphylococcus aureus (strain MSSA476).